Here is a 421-residue protein sequence, read N- to C-terminus: 3-isopropylmalate dehydratase large subunit (421 aa).

The [4Fe-4S] cluster site is built by cysteine 302, cysteine 362, and cysteine 365.

It belongs to the aconitase/IPM isomerase family. LeuC type 2 subfamily. Heterodimer of LeuC and LeuD. It depends on [4Fe-4S] cluster as a cofactor.

The enzyme catalyses (2R,3S)-3-isopropylmalate = (2S)-2-isopropylmalate. The protein operates within amino-acid biosynthesis; L-leucine biosynthesis; L-leucine from 3-methyl-2-oxobutanoate: step 2/4. Its function is as follows. Catalyzes the isomerization between 2-isopropylmalate and 3-isopropylmalate, via the formation of 2-isopropylmaleate. This chain is 3-isopropylmalate dehydratase large subunit, found in Campylobacter fetus subsp. fetus (strain 82-40).